Consider the following 201-residue polypeptide: Recombination protein RecR (201 aa).

Residues 57–74 form a C4-type zinc finger; the sequence is CRICGNITENSVNPCAIC. The Toprim domain maps to 82–178; it reads STVFVVENSR…KVTRLAHGLA (97 aa).

It belongs to the RecR family.

In terms of biological role, may play a role in DNA repair. It seems to be involved in an RecBC-independent recombinational process of DNA repair. It may act with RecF and RecO. The chain is Recombination protein RecR from Leuconostoc citreum (strain KM20).